The sequence spans 734 residues: Diacylglycerol kinase alpha (734 aa).

2 consecutive EF-hand domains span residues arginine 109–methionine 144 and glutamate 154–leucine 189. Aspartate 122, aspartate 124, asparagine 126, glutamate 133, aspartate 167, aspartate 169, serine 171, serine 173, and glutamate 178 together coordinate Ca(2+). 2 consecutive Phorbol-ester/DAG-type zinc fingers follow at residues glutamine 204–cysteine 252 and threonine 268–cysteine 318. The segment at asparagine 358–proline 505 is necessary and sufficient for the diacylglycerol kinase activity. The DAGKc domain maps to serine 371–proline 505. Lysine 483 is subject to N6-acetyllysine.

Belongs to the eukaryotic diacylglycerol kinase family. As to quaternary structure, monomer.

It is found in the cytoplasm. It localises to the cytosol. The enzyme catalyses a 1,2-diacyl-sn-glycerol + ATP = a 1,2-diacyl-sn-glycero-3-phosphate + ADP + H(+). It carries out the reaction a 1-O-alkyl-sn-glycerol + ATP = a 1-O-alkyl-sn-glycero-3-phosphate + ADP + H(+). The catalysed reaction is 1-O-alkyl-2-acyl-sn-glycerol + ATP = 1-O-alkyl-2-acyl-sn-glycero-3-phosphate + ADP + H(+). It catalyses the reaction 1,2-dihexadecanoyl-sn-glycerol + ATP = 1,2-dihexadecanoyl-sn-glycero-3-phosphate + ADP + H(+). The enzyme catalyses 1-hexadecanoyl-2-(9Z-octadecenoyl)-sn-glycerol + ATP = 1-hexadecanoyl-2-(9Z-octadecenoyl)-sn-glycero-3-phosphate + ADP + H(+). It carries out the reaction 2-(9Z-octadecenoyl)-glycerol + ATP = 2-(9Z-octadecenoyl)-sn-glycero-3-phosphate + ADP + H(+). The catalysed reaction is 1,2-di-(9Z-octadecenoyl)-sn-glycerol + ATP = 1,2-di-(9Z-octadecenoyl)-sn-glycero-3-phosphate + ADP + H(+). It catalyses the reaction 1-octadecanoyl-2-(5Z,8Z,11Z,14Z-eicosatetraenoyl)-sn-glycerol + ATP = 1-octadecanoyl-2-(5Z,8Z,11Z,14Z-eicosatetraenoyl)-sn-glycero-3-phosphate + ADP + H(+). The enzyme catalyses 1,2-didecanoyl-sn-glycerol + ATP = 1,2-didecanoyl-sn-glycero-3-phosphate + ADP + H(+). It carries out the reaction 1-O-hexadecyl-2-acetyl-sn-glycerol + ATP = 1-O-hexadecyl-2-acetyl-sn-glycero-3-phosphate + ADP + H(+). The catalysed reaction is 1-O-hexadecyl-2-(5Z,8Z,11Z,14Z-eicosatetraenoyl)-sn-glycerol + ATP = 1-O-hexadecyl-2-(5Z,8Z,11Z,14Z-eicosatetraenoyl)-sn-glycero-3-phosphate + ADP + H(+). It catalyses the reaction 1-O-hexadecyl-2-(9Z-octadecenoyl)-sn-glycerol + ATP = 1-O-hexadecyl-2-(9Z-octadecenoyl)-sn-glycero-3-phosphate + ADP + H(+). The enzyme catalyses 1-O-hexadecyl-sn-glycerol + ATP = 1-O-hexadecyl-sn-glycero-3-phosphate + ADP + H(+). It functions in the pathway lipid metabolism; glycerolipid metabolism. Stimulated by calcium and phosphatidylserine. Diacylglycerol kinase that converts diacylglycerol/DAG into phosphatidic acid/phosphatidate/PA and regulates the respective levels of these two bioactive lipids. Thereby, acts as a central switch between the signaling pathways activated by these second messengers with different cellular targets and opposite effects in numerous biological processes. Also plays an important role in the biosynthesis of complex lipids. Can also phosphorylate 1-alkyl-2-acylglycerol in vitro as efficiently as diacylglycerol provided it contains an arachidonoyl group. Also involved in the production of alkyl-lysophosphatidic acid, another bioactive lipid, through the phosphorylation of 1-alkyl-2-acetyl glycerol. In Sus scrofa (Pig), this protein is Diacylglycerol kinase alpha (DGKA).